The chain runs to 442 residues: Aspartate--tRNA(Asp/Asn) ligase (442 aa).

Residue Glu172 participates in L-aspartate binding. An aspartate region spans residues 194–197 (QFYK). Arg216 is a binding site for L-aspartate. Residues 216–218 (RAE), 224–226 (RHL), and Glu365 each bind ATP. Residues Glu365 and Thr368 each coordinate Mg(2+). The L-aspartate site is built by Thr368 and Arg372. An ATP-binding site is contributed by 413–416 (GLER).

It belongs to the class-II aminoacyl-tRNA synthetase family. Type 2 subfamily. As to quaternary structure, homodimer. The cofactor is Mg(2+).

Its subcellular location is the cytoplasm. The catalysed reaction is tRNA(Asx) + L-aspartate + ATP = L-aspartyl-tRNA(Asx) + AMP + diphosphate. In terms of biological role, aspartyl-tRNA synthetase with relaxed tRNA specificity since it is able to aspartylate not only its cognate tRNA(Asp) but also tRNA(Asn). Reaction proceeds in two steps: L-aspartate is first activated by ATP to form Asp-AMP and then transferred to the acceptor end of tRNA(Asp/Asn). The sequence is that of Aspartate--tRNA(Asp/Asn) ligase (aspS) from Aeropyrum pernix (strain ATCC 700893 / DSM 11879 / JCM 9820 / NBRC 100138 / K1).